The primary structure comprises 365 residues: Alanine racemase (365 aa).

Lys32 serves as the catalytic Proton acceptor; specific for D-alanine. Residue Lys32 is modified to N6-(pyridoxal phosphate)lysine. A substrate-binding site is contributed by Arg128. Catalysis depends on Tyr257, which acts as the Proton acceptor; specific for L-alanine. Met305 provides a ligand contact to substrate.

This sequence belongs to the alanine racemase family. Requires pyridoxal 5'-phosphate as cofactor.

It catalyses the reaction L-alanine = D-alanine. It participates in amino-acid biosynthesis; D-alanine biosynthesis; D-alanine from L-alanine: step 1/1. Catalyzes the interconversion of L-alanine and D-alanine. May also act on other amino acids. This chain is Alanine racemase (alr), found in Francisella tularensis subsp. novicida (strain U112).